The chain runs to 145 residues: Secreted LysM effector Vd2LysM (145 aa).

A signal peptide spans 1–18; it reads MRPDVFVLFTAFLGPAAA. 2 LysM domains span residues 31–75 and 96–140; these read GWYI…KIKV and GWYH…DIVV.

This sequence belongs to the secreted LysM effector family. As to quaternary structure, forms homodimers in a chitin-independent manner through interactions at the N-termini of EPL2 monomers. Homodimers are further polymerized in a chitin-dependent manner.

Secreted effector that enables the plant pathogenic fungus to manipulate host defenses for successful infection. Binds chitin, suppresses chitin-induced immune responses and protects hyphae against degradation by plant hydrolytic enzymes. Chitin-induced polymerization of homodimers forms a contiguous ELP2 highly oligomeric super-complexe that may precipitate at infection sites to eliminate chitin oligomers, and thus suppress the activation of chitin-induced plant immunity. The protein is Secreted LysM effector Vd2LysM of Verticillium dahliae (strain VdLs.17 / ATCC MYA-4575 / FGSC 10137) (Verticillium wilt).